The primary structure comprises 259 residues: Bidirectional sugar transporter SWEET6a (259 aa).

The Extracellular portion of the chain corresponds to Met1–Asn9. A helical membrane pass occupies residues Val10–Phe30. The region spanning Val10–Lys98 is the MtN3/slv 1 domain. At Trp31–Asp45 the chain is on the cytoplasmic side. The chain crosses the membrane as a helical span at residues Pro46–His66. Residues Pro67–Ser69 are Extracellular-facing. Residues Ile70–Phe90 traverse the membrane as a helical segment. Topologically, residues Phe91–Cys103 are cytoplasmic. Residues Ala104–Ala124 form a helical membrane-spanning segment. The Extracellular portion of the chain corresponds to His125 to Ser131. A helical transmembrane segment spans residues Met132 to Ile152. The 84-residue stretch at Ile133–Thr216 folds into the MtN3/slv 2 domain. At Met153–Met165 the chain is on the cytoplasmic side. Residues Pro166–Ile186 traverse the membrane as a helical segment. Over Arg187–Asp189 the chain is Extracellular. The helical transmembrane segment at Ile190–Tyr210 threads the bilayer. The Cytoplasmic segment spans residues Ala211–Arg259.

Belongs to the SWEET sugar transporter family. Forms homooligomers and/or heterooligomers.

It localises to the cell membrane. Mediates both low-affinity uptake and efflux of sugar across the plasma membrane. The polypeptide is Bidirectional sugar transporter SWEET6a (SWEET6A) (Oryza sativa subsp. indica (Rice)).